Reading from the N-terminus, the 223-residue chain is Uracil-DNA glycosylase (223 aa).

D61 acts as the Proton acceptor in catalysis.

It belongs to the uracil-DNA glycosylase (UDG) superfamily. UNG family.

It localises to the cytoplasm. It catalyses the reaction Hydrolyzes single-stranded DNA or mismatched double-stranded DNA and polynucleotides, releasing free uracil.. Functionally, excises uracil residues from the DNA which can arise as a result of misincorporation of dUMP residues by DNA polymerase or due to deamination of cytosine. The protein is Uracil-DNA glycosylase of Haemophilus ducreyi (strain 35000HP / ATCC 700724).